A 512-amino-acid polypeptide reads, in one-letter code: Maturase K (512 aa).

This sequence belongs to the intron maturase 2 family. MatK subfamily.

It is found in the plastid. The protein localises to the chloroplast. Usually encoded in the trnK tRNA gene intron. Probably assists in splicing its own and other chloroplast group II introns. The sequence is that of Maturase K from Lemna aequinoctialis (Lesser duckweed).